Consider the following 88-residue polypeptide: Small ribosomal subunit protein uS19 (88 aa).

This sequence belongs to the universal ribosomal protein uS19 family.

In terms of biological role, protein S19 forms a complex with S13 that binds strongly to the 16S ribosomal RNA. The polypeptide is Small ribosomal subunit protein uS19 (rpsS) (Chlamydia pneumoniae (Chlamydophila pneumoniae)).